We begin with the raw amino-acid sequence, 279 residues long: CDP-paratose synthase (279 aa).

The Proton acceptor role is filled by Tyr-115.

Belongs to the NAD(P)-dependent epimerase/dehydratase family.

It catalyses the reaction CDP-alpha-D-paratose + NADP(+) = CDP-4-dehydro-3,6-dideoxy-alpha-D-glucose + NADPH + H(+). It functions in the pathway nucleotide-sugar biosynthesis; CDP-3,6-dideoxy-D-mannose biosynthesis; CDP-3,6-dideoxy-D-mannose from CTP and alpha-D-glucose 1-phosphate: step 4/5. Its function is as follows. Catalyzes synthesis of paratose and tyvelose, unusual 3,6-dideoxyhexose sugars that form part of the O-antigen in the lipopolysaccharides of several enteric bacteria. In Salmonella typhi, this protein is CDP-paratose synthase (rfbS).